Reading from the N-terminus, the 652-residue chain is tRNA 5-methylaminomethyl-2-thiouridine biosynthesis bifunctional protein MnmC (652 aa).

The segment at 1 to 235 (MPDRLVPATL…EPALRVGEYA (235 aa)) is tRNA (mnm(5)s(2)U34)-methyltransferase. The FAD-dependent cmnm(5)s(2)U34 oxidoreductase stretch occupies residues 259-652 (IGAGLAGCAV…IRALRGRQIG (394 aa)).

In the N-terminal section; belongs to the methyltransferase superfamily. tRNA (mnm(5)s(2)U34)-methyltransferase family. This sequence in the C-terminal section; belongs to the DAO family. It depends on FAD as a cofactor.

The protein resides in the cytoplasm. The catalysed reaction is 5-aminomethyl-2-thiouridine(34) in tRNA + S-adenosyl-L-methionine = 5-methylaminomethyl-2-thiouridine(34) in tRNA + S-adenosyl-L-homocysteine + H(+). Its function is as follows. Catalyzes the last two steps in the biosynthesis of 5-methylaminomethyl-2-thiouridine (mnm(5)s(2)U) at the wobble position (U34) in tRNA. Catalyzes the FAD-dependent demodification of cmnm(5)s(2)U34 to nm(5)s(2)U34, followed by the transfer of a methyl group from S-adenosyl-L-methionine to nm(5)s(2)U34, to form mnm(5)s(2)U34. The sequence is that of tRNA 5-methylaminomethyl-2-thiouridine biosynthesis bifunctional protein MnmC from Burkholderia ambifaria (strain ATCC BAA-244 / DSM 16087 / CCUG 44356 / LMG 19182 / AMMD) (Burkholderia cepacia (strain AMMD)).